A 1097-amino-acid chain; its full sequence is DNA-directed RNA polymerase subunit beta (1097 aa).

Residues Gln1072–Asp1097 form a disordered region. The segment covering Arg1077–Thr1091 has biased composition (polar residues).

Belongs to the RNA polymerase beta chain family. In terms of assembly, in cyanobacteria the RNAP catalytic core is composed of 2 alpha, 1 beta, 1 beta', 1 gamma and 1 omega subunit. When a sigma factor is associated with the core the holoenzyme is formed, which can initiate transcription.

The catalysed reaction is RNA(n) + a ribonucleoside 5'-triphosphate = RNA(n+1) + diphosphate. DNA-dependent RNA polymerase catalyzes the transcription of DNA into RNA using the four ribonucleoside triphosphates as substrates. The polypeptide is DNA-directed RNA polymerase subunit beta (Prochlorococcus marinus (strain AS9601)).